A 155-amino-acid polypeptide reads, in one-letter code: Nucleosome assembly protein 1-like 5 (155 aa).

Basic and acidic residues predominate over residues 1–16 (MADPEKQGPAESRAED). A disordered region spans residues 1 to 60 (MADPEKQGPAESRAEDEVMEGAQGGEDAATGDSATAPAAEEPQAPAENAPKPKNDFIESL). The span at 27–49 (DAATGDSATAPAAEEPQAPAENA) shows a compositional bias: low complexity. Residues 68–94 (VLALKKLQKRCDKIEAKFDKEFQALEK) adopt a coiled-coil conformation. Residues 119–155 (WTLEGEDDEDDEEEEDEEEEEEEAAAGATGGPDSAEK) are disordered. A compositionally biased stretch (acidic residues) spans 122-142 (EGEDDEDDEEEEDEEEEEEEA).

It belongs to the nucleosome assembly protein (NAP) family.

Its subcellular location is the nucleus. The sequence is that of Nucleosome assembly protein 1-like 5 (Nap1l5) from Rattus norvegicus (Rat).